A 626-amino-acid chain; its full sequence is Chaperone protein HtpG (626 aa).

Positions 1 to 341 are a; substrate-binding; it reads MAKREFKAES…SEDLSLNISR (341 aa). The interval 342-552 is b; it reads EMLQHDRQLK…DGEVTIEMEK (211 aa). The tract at residues 553–626 is c; it reads ILNAMPDNQH…FTNDICKVMA (74 aa).

It belongs to the heat shock protein 90 family. Homodimer.

The protein resides in the cytoplasm. Functionally, molecular chaperone. Has ATPase activity. This is Chaperone protein HtpG from Bacillus licheniformis (strain ATCC 14580 / DSM 13 / JCM 2505 / CCUG 7422 / NBRC 12200 / NCIMB 9375 / NCTC 10341 / NRRL NRS-1264 / Gibson 46).